The sequence spans 391 residues: Probable protein arginine N-methyltransferase 6.1 (391 aa).

The tract at residues 1–35 is disordered; the sequence is MLPSHLNGHSPLARRCPRLSAASPPATGDSDAAAA. Low complexity predominate over residues 20-35; the sequence is SAASPPATGDSDAAAA. Positions 45–391 constitute an SAM-dependent MTase PRMT-type domain; the sequence is DRIYFQSYSH…QTLVKDYAMR (347 aa). Residues histidine 58, arginine 67, glycine 91, glutamate 113, and glutamate 142 each contribute to the S-adenosyl-L-methionine site. Active-site residues include glutamate 156 and glutamate 165.

It belongs to the class I-like SAM-binding methyltransferase superfamily. Protein arginine N-methyltransferase family. PRMT6 subfamily.

Functionally, arginine methyltransferase that can both catalyze the formation of omega-N monomethylarginine (MMA) and asymmetrical dimethylarginine (aDMA). This is Probable protein arginine N-methyltransferase 6.1 (PRMT6.1) from Oryza sativa subsp. japonica (Rice).